A 288-amino-acid polypeptide reads, in one-letter code: F420-non-reducing hydrogenase vhu subunit G (288 aa).

Belongs to the [NiFe]/[NiFeSe] hydrogenase small subunit family. As to quaternary structure, the F420-non-reducing hydrogenase vhu is composed of four subunits; VhuA, VhuD, VhuG and VhuU.

In Methanocaldococcus jannaschii (strain ATCC 43067 / DSM 2661 / JAL-1 / JCM 10045 / NBRC 100440) (Methanococcus jannaschii), this protein is F420-non-reducing hydrogenase vhu subunit G (vhuG).